Here is a 501-residue protein sequence, read N- to C-terminus: Zinc finger C3HC-type protein 1 (501 aa).

Residue alanine 2 is modified to N-acetylalanine. The interval 21-73 is disordered; it reads VVRSPEGTPQKVRELIDEGIVPEEGGTEPKDTAATFQSVDGSPQAEQSPLEST. At serine 24 the chain carries Phosphoserine. The residue at position 28 (threonine 28) is a Phosphothreonine. The span at 54-72 shows a compositional bias: polar residues; sequence ATFQSVDGSPQAEQSPLES. Phosphoserine occurs at positions 58, 62, and 68. Phosphothreonine is present on threonine 84. Residues 102 to 156 form a C3HC-type zinc finger; that stretch reads CAKYGWVTVECDMLKCSSCQAFLCASLQPTFDFGRYKERCAELKKSLCSAHEKFC. A disordered region spans residues 302–421; that stretch reads SPIPGVEGRP…TSPRSFFDPT (120 aa). Serine 320 and serine 328 each carry phosphoserine. Positions 326 to 338 are enriched in polar residues; it reads TRSQDATVSPGSE. Threonine 332 is subject to Phosphothreonine. Serine 334, serine 337, serine 343, serine 353, serine 358, serine 369, and serine 380 each carry phosphoserine. Composition is skewed to polar residues over residues 350–359 and 369–383; these read RTRSWESSSP and SPTT…SMGT. Phosphothreonine is present on threonine 383. Position 394 is a phosphoserine (serine 394). Positions 395 to 401 match the Nuclear localization signal motif; the sequence is PLRRTKR. Serine 406 and serine 482 each carry phosphoserine. Residues 406-420 are compositionally biased toward low complexity; it reads SSSSSDTSPRSFFDP.

In terms of assembly, interacts with TPR; this interaction mediates ZC3HC1 nuclear envelopes (NE)-association but also required for proper positioning of a substantial amount of TPR at the nuclear basket (NB). In terms of processing, phosphorylated. May also be weakly phosphorylated on Tyr residues.

It localises to the nucleus. It is found in the nucleus envelope. Functionally, required for proper positioning of a substantial amount of TPR at the nuclear basket (NB) through interaction with TPR. In Mus musculus (Mouse), this protein is Zinc finger C3HC-type protein 1 (Zc3hc1).